The chain runs to 465 residues: Na(+)-translocating NADH-quinone reductase subunit A (465 aa).

This sequence belongs to the NqrA family. Composed of six subunits; NqrA, NqrB, NqrC, NqrD, NqrE and NqrF.

It catalyses the reaction a ubiquinone + n Na(+)(in) + NADH + H(+) = a ubiquinol + n Na(+)(out) + NAD(+). Its function is as follows. NQR complex catalyzes the reduction of ubiquinone-1 to ubiquinol by two successive reactions, coupled with the transport of Na(+) ions from the cytoplasm to the periplasm. NqrA to NqrE are probably involved in the second step, the conversion of ubisemiquinone to ubiquinol. This chain is Na(+)-translocating NADH-quinone reductase subunit A, found in Chlamydia muridarum (strain MoPn / Nigg).